We begin with the raw amino-acid sequence, 541 residues long: Glutamyl-tRNA(Gln) amidotransferase subunit A, chloroplastic/mitochondrial (541 aa).

Active-site charge relay system residues include K121 and S196. The active-site Acyl-ester intermediate is the S220.

This sequence belongs to the amidase family. GatA subfamily. As to quaternary structure, subunit of the heterotrimeric GatCAB amidotransferase (AdT) complex, composed of A, B and C subunits.

It localises to the mitochondrion. The protein localises to the plastid. It is found in the chloroplast stroma. It catalyses the reaction L-glutamyl-tRNA(Gln) + L-glutamine + ATP + H2O = L-glutaminyl-tRNA(Gln) + L-glutamate + ADP + phosphate + H(+). Its function is as follows. Allows the formation of correctly charged Gln-tRNA(Gln) through the transamidation of misacylated Glu-tRNA(Gln) in chloroplasts and mitochondria. The reaction takes place in the presence of glutamine and ATP through an activated gamma-phospho-Glu-tRNA(Gln). The sequence is that of Glutamyl-tRNA(Gln) amidotransferase subunit A, chloroplastic/mitochondrial from Sorghum bicolor (Sorghum).